Consider the following 146-residue polypeptide: Large ribosomal subunit protein uL13 (146 aa).

The protein belongs to the universal ribosomal protein uL13 family. As to quaternary structure, part of the 50S ribosomal subunit.

Functionally, this protein is one of the early assembly proteins of the 50S ribosomal subunit, although it is not seen to bind rRNA by itself. It is important during the early stages of 50S assembly. This Spiroplasma citri protein is Large ribosomal subunit protein uL13.